Here is a 362-residue protein sequence, read N- to C-terminus: 2-oxoglutarate-dependent dioxygenase lolO2 (362 aa).

Positions 199–312 constitute a Fe2OG dioxygenase domain; it reads TWNYFLGQPV…RYSLVFFGHL (114 aa). 3 residues coordinate Fe cation: histidine 222, aspartate 224, and histidine 280. Arginine 303 provides a ligand contact to 2-oxoglutarate.

Belongs to the iron/ascorbate-dependent oxidoreductase family. It depends on Fe(2+) as a cofactor.

The protein operates within alkaloid biosynthesis. 2-oxoglutarate-dependent dioxygenase; part of the gene cluster that mediates the biosynthesis of loline alkaloids, potent insecticidal agents composed of a pyrrolizidine ring system and an uncommon ether bridge linking carbons 2 and 7. Lolines are structurally differentiated by the various modifications of the L-amino group and include norloline, loline, N-methylloline, N-acetylloline, N-acetylnorloline, and N-formylloline. The first committed step is the condensation of O-acetyl-L-homoserine (derived from L-aspartic acid) and L-proline, probably catalyzed by the gamma-type pyridoxal 5'-phosphate(PLP)-dependent enzyme lolC, to give the diamino diacid, NACPP. Ensuing cyclization, decarboxylation, and acetylation steps yield 1-exo-acetamidopyrrolizidine (AcAP). LolO is required for installation of the ether bridge upon the pathway intermediate, 1-exo-acetamidopyrrolizidine (AcAP). In sequential 2-oxoglutarate- and O(2)-consuming steps, lolO removes hydrogens from C2 and C7 of AcAP to form both carbon-oxygen bonds in N-acetylnorloline (NANL), the precursor to all other lolines. The enzymes lolD, lolE, lolF and lolT have also been proposed to be involved in the ether-bridge installation. Further processing of the exocyclic moiety of NANL by fungal N-acetamidase (LolN), methyltransferase (LolM), and cytochrome P450 (LolP) enzymes, with occasional involvement of a plant acetyltransferase, generates the other known lolines. LolN transforms NANL to norlonine which is monomethylated and dimethylated to respectively lonine and N-methyllonine (NML) by lolM. LolP catalyzes hydroxylation of the methyl group in N-methylloline (NML) and further oxygenation to N-formylloline (NFL). A plant acetyltransferase is responsible for the acetylation of loline to form N-acetylloline (NAL). LolA might interact with aspartate kinase to prevent feedback inhibition of its activity by these end products and thereby promote production of L-homoserine from L-aspartate. This chain is 2-oxoglutarate-dependent dioxygenase lolO2, found in Epichloe uncinata (Endophyte fungus).